Here is a 270-residue protein sequence, read N- to C-terminus: Undecaprenyl-diphosphatase 1 (270 aa).

7 helical membrane passes run 5-25 (YYILKYLILGLFQGLTEPIPI), 42-62 (IEGFSFELLVNSASLLAVLLI), 89-109 (FFFIIYLVIATIPAGVIGVLF), 117-137 (LKGVKMVGISLLITAVGLWII), 192-212 (FSFLLYIPVSLGGLLLSITDI), 220-240 (TLFVPYIVAFIATFIMTYISL), and 250-270 (GNLKYFSFYCIIVGVLTLIFL).

This sequence belongs to the UppP family.

It localises to the cell membrane. The enzyme catalyses di-trans,octa-cis-undecaprenyl diphosphate + H2O = di-trans,octa-cis-undecaprenyl phosphate + phosphate + H(+). Catalyzes the dephosphorylation of undecaprenyl diphosphate (UPP). Confers resistance to bacitracin. The polypeptide is Undecaprenyl-diphosphatase 1 (Bacillus cereus (strain ATCC 10987 / NRS 248)).